A 530-amino-acid polypeptide reads, in one-letter code: Autoinducer-2 kinase (530 aa).

The protein belongs to the FGGY kinase family.

It is found in the cytoplasm. The enzyme catalyses (S)-4,5-dihydroxypentane-2,3-dione + ATP = (2S)-2-hydroxy-3,4-dioxopentyl phosphate + ADP + H(+). Its function is as follows. Catalyzes the phosphorylation of autoinducer-2 (AI-2) to phospho-AI-2, which subsequently inactivates the transcriptional regulator LsrR and leads to the transcription of the lsr operon. Phosphorylates the ring-open form of (S)-4,5-dihydroxypentane-2,3-dione (DPD), which is the precursor to all AI-2 signaling molecules, at the C5 position. In Salmonella choleraesuis (strain SC-B67), this protein is Autoinducer-2 kinase.